A 673-amino-acid polypeptide reads, in one-letter code: Sodium/myo-inositol cotransporter 2 (673 aa).

The Extracellular segment spans residues 1–27; sequence MESATISPQPPQSDSLEAFPQKSMEPA. A helical membrane pass occupies residues 28–48; the sequence is DIAVLVLYFLFVLAVGLWSTV. Topologically, residues 49–65 are cytoplasmic; it reads RTKRDTVKGYFLAGGDM. Residues 66–88 form a helical membrane-spanning segment; sequence VWWPVGASLFASNVGSGHFIGLA. Topologically, residues 89-102 are extracellular; the sequence is GSGAAVGISVAAYE. A helical membrane pass occupies residues 103–123; the sequence is LNGLFSVLMLAWVFLPIYIAG. The Cytoplasmic portion of the chain corresponds to 124-148; it reads QVTTMPEYLRRRFGGNRISITLAVL. A helical transmembrane segment spans residues 149–169; that stretch reads YLFIYIFTKISVDMYAGAIFI. Over 170–180 the chain is Extracellular; the sequence is QQSLHLDLYLA. A helical transmembrane segment spans residues 181 to 201; sequence IVGLLAITALYTVAGGLAAVI. Residues 202-208 lie on the Cytoplasmic side of the membrane; sequence YTDALQT. A helical transmembrane segment spans residues 209–229; that stretch reads VIMLIGAFILMGYSFAAVGGM. At 230–272 the chain is on the extracellular side; it reads EGLKDQYFLALASNRSENSSCGLPREDAFHIFRDPLTSDLPWP. Residues 273–293 traverse the membrane as a helical segment; the sequence is GILFGMSIPSLWYWCTDQVIV. Over 294-308 the chain is Cytoplasmic; it reads QRSLAAKNLSHAKGG. A helical transmembrane segment spans residues 309-329; it reads SLMAAYLKVLPLFLMVFPGMV. Over 330–375 the chain is Extracellular; sequence SRVLFPDQVACAHPDICQRVCSNPSGCSDIAYPKLVLELLPTGLRG. Residues 376-396 form a helical membrane-spanning segment; it reads LMMAVMVAALMSSLTSIFNSA. Over 397–418 the chain is Cytoplasmic; sequence STIFTMDLWNHIRPRASERELM. The helical transmembrane segment at 419 to 439 threads the bilayer; sequence IVGRIFVFALVLVSILWIPIV. Residues 440–446 lie on the Extracellular side of the membrane; it reads QASQGGQ. A helical membrane pass occupies residues 447-467; the sequence is LFIYIQSISSYLQPPVAMVFI. The Cytoplasmic portion of the chain corresponds to 468 to 479; it reads MGCFWKRTNEKG. The chain crosses the membrane as a helical span at residues 480-500; that stretch reads AFSGLILGLLLGLVRLILDFV. Over 501–521 the chain is Extracellular; the sequence is YAQPRCDQPDDRPAVVKDVHY. Residues 522–542 traverse the membrane as a helical segment; sequence LYFSMILSFTTLITVVTVSWF. Topologically, residues 543 to 652 are cytoplasmic; it reads TETPSKEMVS…SLEENPLVKT (110 aa). The helical transmembrane segment at 653–673 threads the bilayer; the sequence is LLDVNCIVCISCAIFLWGYFA.

This sequence belongs to the sodium:solute symporter (SSF) (TC 2.A.21) family.

It is found in the membrane. The protein localises to the apical cell membrane. It catalyses the reaction myo-inositol(out) + 2 Na(+)(out) = myo-inositol(in) + 2 Na(+)(in). The catalysed reaction is 1D-chiro-inositol(out) + 2 Na(+)(out) = 1D-chiro-inositol(in) + 2 Na(+)(in). It carries out the reaction D-glucose(out) + 2 Na(+)(out) = D-glucose(in) + 2 Na(+)(in). The enzyme catalyses D-xylose(out) + 2 Na(+)(out) = D-xylose(in) + 2 Na(+)(in). Its activity is regulated as follows. MI transport activity inhibited by D-chiro-inositol (DCI), phlorizin (Pz) and sodium (Na(+)). Insulin increases D-chiro-inositol uptake. Its function is as follows. Involved in the sodium-dependent cotransport of myo-inositol (MI) with a Na(+):MI stoichiometry of 2:1. Exclusively responsible for apical MI transport and absorption in intestine. Can also transport D-chiro-inositol (DCI) but not L-fucose. Exhibits stereospecific cotransport of both D-glucose and D-xylose. May induce apoptosis through the TNF-alpha, PDCD1 pathway. May play a role in the regulation of MI concentration in serum, involving reabsorption in at least the proximal tubule of the kidney. This Mus musculus (Mouse) protein is Sodium/myo-inositol cotransporter 2.